An 823-amino-acid polypeptide reads, in one-letter code: Hypoxia-inducible factor 1-alpha (823 aa).

Positions 1 to 30 are disordered; sequence MEGAGGANDKKKISSERRKEKSRDAARSRR. Positions 1-401 are interaction with TSGA10; it reads MEGAGGANDK…KEPDALTLLA (401 aa). Residues 8-30 are compositionally biased toward basic and acidic residues; the sequence is NDKKKISSERRKEKSRDAARSRR. The bHLH domain occupies 17–70; that stretch reads RRKEKSRDAARSRRSKESEVFYELAHQLPLPHNVSSHLDKASVMRLTISYLRVR. The tract at residues 21 to 30 is DNA-binding; it reads KSRDAARSRR. Positions 85 to 158 constitute a PAS 1 domain; that stretch reads KAQMNCFYLK…THRNGLVKKG (74 aa). The tract at residues 170 to 191 is required for heterodimer formation with ARNT; sequence RMKCTLTSRGRTMNIKSATWKV. Positions 228–298 constitute a PAS 2 domain; that stretch reads PHPSNIEIPL…KTHHDMFTKG (71 aa). A Phosphoserine; by CK1 modification is found at Ser-247. Residues 302–345 form the PAC domain; the sequence is TGQYRMLAKRGGYVWIETQATVIYNTKNSQPQCIVCVNYVVSGI. The ODD stretch occupies residues 401–600; the sequence is APAAGDTIIS…QSASTNTVFQ (200 aa). A 4-hydroxyproline modification is found at Pro-402. The segment covering 494–517 has biased composition (polar residues); sequence IQDQPASPSDGSTRQSSPEPNSPS. The disordered stretch occupies residues 494 to 521; that stretch reads IQDQPASPSDGSTRQSSPEPNSPSEYCF. Positions 531–575 are NTAD; it reads FKLELVEKLFAEDTEAKNPFSTQDTDLDLEMLAPYIPMDDDFQLR. Lys-532 is modified (N6-acetyllysine; alternate). A Glycyl lysine isopeptide (Lys-Gly) (interchain with G-Cter in ubiquitin); alternate cross-link involves residue Lys-532. Residues Lys-538 and Lys-547 each participate in a glycyl lysine isopeptide (Lys-Gly) (interchain with G-Cter in ubiquitin) cross-link. Ser-551 carries the post-translational modification Phosphoserine; by GSK3-beta. Residue Thr-555 is modified to Phosphothreonine; by GSK3-beta. The residue at position 564 (Pro-564) is a 4-hydroxyproline. At Ser-576 the chain carries Phosphoserine; by PLK3. An ID region spans residues 576-782; it reads SFDQLSPLEN…SDLACRLLGQ (207 aa). Disordered regions lie at residues 581–602 and 639–685; these read SPLE…FQPT and PSPP…PRSP. Residue Ser-589 is modified to Phosphoserine; by GSK3-beta. Polar residues predominate over residues 651–666; sequence ATTSPYSDTGSRTASP. At Ser-654 the chain carries Phosphoserine; by PLK3. Lys-706 bears the N6-acetyllysine mark. Residues 715–721 carry the Nuclear localization signal motif; it reads RKRKIEH. The tract at residues 783-823 is CTAD; sequence SMDESGLPQLTSYDCEVNAPIQGSRNLLQGEELLRALDQVN. Cys-797 is subject to S-nitrosocysteine. At Asn-800 the chain carries (3S)-3-hydroxyasparagine.

In terms of assembly, interacts with the ARNT; forms a heterodimer that binds core DNA sequence 5'-TACGTG-3' within the hypoxia response element (HRE) of target gene promoters. Interacts with COPS5; the interaction increases the transcriptional activity of HIF1A through increased stability. Interacts with EP300 (via TAZ-type 1 domains); the interaction is stimulated in response to hypoxia and inhibited by CITED2. Interacts with CREBBP (via TAZ-type 1 domains). Interacts with NCOA1, NCOA2, APEX1 and HSP90. Interacts (hydroxylated within the ODD domain) with VHLL (via beta domain); the interaction, leads to polyubiquitination and subsequent HIF1A proteasomal degradation. During hypoxia, sumoylated HIF1A also binds VHL; the interaction promotes the ubiquitination of HIF1A. Interacts with SENP1; the interaction desumoylates HIF1A resulting in stabilization and activation of transcription. Interacts (via the ODD domain) with NAA10; the interaction appears not to acetylate HIF1A nor have any affect on protein stability, during hypoxia. Interacts with RWDD3; the interaction enhances HIF1A sumoylation. Interacts with TSGA10. Interacts with HIF3A. Interacts with RORA (via the DNA binding domain); the interaction enhances HIF1A transcription under hypoxia through increasing protein stability. Interaction with PSMA7 inhibits the transactivation activity of HIF1A under both normoxic and hypoxia-mimicking conditions. Interacts with USP20. Interacts with RACK1; promotes HIF1A ubiquitination and proteasome-mediated degradation. Interacts (via N-terminus) with USP19. Interacts with SIRT2. Interacts (deacetylated form) with EGLN1. Interacts with CBFA2T3. Interacts with HSP90AA1 and HSP90AB1. Interacts with DCUN1D1; this interaction increases the interaction between VHL and DCUN1D1. Interacts with HIF1AN. S-nitrosylation of Cys-797 may be responsible for increased recruitment of p300 coactivator necessary for transcriptional activity of HIF-1 complex. Post-translationally, acetylation of Lys-532 by ARD1 increases interaction with VHL and stimulates subsequent proteasomal degradation. Deacetylation of Lys-706 by SIRT2 increases its interaction with and hydroxylation by EGLN1 thereby inactivating HIF1A activity by inducing its proteasomal degradation. In terms of processing, ubiquitinated; in normoxia, following hydroxylation and interaction with VHL. Lys-532 appears to be the principal site of ubiquitination. Clioquinol, the Cu/Zn-chelator, inhibits ubiquitination through preventing hydroxylation at Asn-800. Ubiquitinated by E3 ligase VHL. Deubiquitinated by UCHL1. Requires phosphorylation for DNA-binding. Phosphorylation at Ser-247 by CSNK1D/CK1 represses kinase activity and impairs ARNT binding. Phosphorylation by GSK3-beta and PLK3 promote degradation by the proteasome. Post-translationally, the iron and 2-oxoglutarate dependent 3-hydroxylation of asparagine is (S) stereospecific within HIF CTAD domains. In terms of processing, sumoylated; with SUMO1 under hypoxia. Sumoylation is enhanced through interaction with RWDD3. Both sumoylation and desumoylation seem to be involved in the regulation of its stability during hypoxia. Sumoylation can promote either its stabilization or its VHL-dependent degradation by promoting hydroxyproline-independent HIF1A-VHL complex binding, thus leading to HIF1A ubiquitination and proteasomal degradation. Desumoylation by SENP1 increases its stability amd transcriptional activity. There is a disaccord between various publications on the effect of sumoylation and desumoylation on its stability and transcriptional activity. In normoxia, is hydroxylated on Pro-402 and Pro-564 in the oxygen-dependent degradation domain (ODD) by EGLN1/PHD2 and EGLN2/PHD1. EGLN3/PHD3 has also been shown to hydroxylate Pro-564. The hydroxylated prolines promote interaction with VHL, initiating rapid ubiquitination and subsequent proteasomal degradation. Deubiquitinated by USP20. Under hypoxia, proline hydroxylation is impaired and ubiquitination is attenuated, resulting in stabilization. In normoxia, is hydroxylated on Asn-800 by HIF1AN, thus abrogating interaction with CREBBP and EP300 and preventing transcriptional activation. Repressed by iron ion, via Fe(2+) prolyl hydroxylase (PHD) enzymes-mediated hydroxylation and subsequent proteasomal degradation.

It is found in the cytoplasm. It localises to the nucleus. Induced by reactive oxygen species (ROS). In terms of biological role, functions as a master transcriptional regulator of the adaptive response to hypoxia. Under hypoxic conditions, activates the transcription of over 40 genes, including erythropoietin, glucose transporters, glycolytic enzymes, vascular endothelial growth factor, HILPDA, and other genes whose protein products increase oxygen delivery or facilitate metabolic adaptation to hypoxia. Plays an essential role in embryonic vascularization, tumor angiogenesis and pathophysiology of ischemic disease. Heterodimerizes with ARNT; heterodimer binds to core DNA sequence 5'-TACGTG-3' within the hypoxia response element (HRE) of target gene promoters. Activation requires recruitment of transcriptional coactivators such as CREBBP and EP300. Activity is enhanced by interaction with NCOA1 and/or NCOA2. Interaction with redox regulatory protein APEX1 seems to activate CTAD and potentiates activation by NCOA1 and CREBBP. Involved in the axonal distribution and transport of mitochondria in neurons during hypoxia. This chain is Hypoxia-inducible factor 1-alpha (HIF1A), found in Bos taurus (Bovine).